Consider the following 79-residue polypeptide: Sec-independent protein translocase protein TatA (79 aa).

A helical transmembrane segment spans residues 1-21; that stretch reads MGGFTSIWHWVIVLLVIVLLF. Positions 48 to 79 are disordered; sequence EEEAKNEPKTLDAQATQTKVHESSEIKSKQES. Positions 66-79 are enriched in basic and acidic residues; that stretch reads KVHESSEIKSKQES.

The protein belongs to the TatA/E family. As to quaternary structure, the Tat system comprises two distinct complexes: a TatABC complex, containing multiple copies of TatA, TatB and TatC subunits, and a separate TatA complex, containing only TatA subunits. Substrates initially bind to the TatABC complex, which probably triggers association of the separate TatA complex to form the active translocon.

The protein localises to the cell inner membrane. Part of the twin-arginine translocation (Tat) system that transports large folded proteins containing a characteristic twin-arginine motif in their signal peptide across membranes. TatA could form the protein-conducting channel of the Tat system. This chain is Sec-independent protein translocase protein TatA, found in Helicobacter pylori (strain ATCC 700392 / 26695) (Campylobacter pylori).